A 154-amino-acid polypeptide reads, in one-letter code: Transcription antitermination protein NusB (154 aa).

Belongs to the NusB family.

Its function is as follows. Involved in transcription antitermination. Required for transcription of ribosomal RNA (rRNA) genes. Binds specifically to the boxA antiterminator sequence of the ribosomal RNA (rrn) operons. This chain is Transcription antitermination protein NusB, found in Oleidesulfovibrio alaskensis (strain ATCC BAA-1058 / DSM 17464 / G20) (Desulfovibrio alaskensis).